A 336-amino-acid polypeptide reads, in one-letter code: Deoxyhypusine hydroxylase (336 aa).

HEAT-like PBS-type repeat units follow at residues 68 to 94 (LKHELAYCLGQTRNTDALPFLLDVVQD) and 101 to 127 (CRHEAAEALGALGYESSLEVLKALRDN). Fe cation contacts are provided by His-70, Glu-71, His-103, and Glu-104. The segment at 158-179 (LKPSDFTSIDPAPPMPLTAKEP) is disordered. 2 HEAT-like PBS-type repeats span residues 235–261 (FRHEIAFVFGQLCHPASVPSLTETLSD) and 268–295 (VRHEAAEALGSLGDVEGVEDTLKKFLND). The Fe cation site is built by His-237, Glu-238, His-270, and Glu-271.

Belongs to the deoxyhypusine hydroxylase family. Fe(2+) serves as cofactor.

Its subcellular location is the cytoplasm. The protein resides in the nucleus. The enzyme catalyses [eIF5A protein]-deoxyhypusine + AH2 + O2 = [eIF5A protein]-hypusine + A + H2O. It participates in protein modification; eIF5A hypusination. Catalyzes the hydroxylation of the N(6)-(4-aminobutyl)-L-lysine intermediate to form hypusine, an essential post-translational modification only found in mature eIF-5A factor. The sequence is that of Deoxyhypusine hydroxylase (lia1) from Emericella nidulans (strain FGSC A4 / ATCC 38163 / CBS 112.46 / NRRL 194 / M139) (Aspergillus nidulans).